Here is a 215-residue protein sequence, read N- to C-terminus: Small ribosomal subunit protein eS1 (215 aa).

A disordered region spans residues serine 195 to asparagine 215.

This sequence belongs to the eukaryotic ribosomal protein eS1 family.

This chain is Small ribosomal subunit protein eS1, found in Thermoplasma acidophilum (strain ATCC 25905 / DSM 1728 / JCM 9062 / NBRC 15155 / AMRC-C165).